The sequence spans 204 residues: Large ribosomal subunit protein eL15 (204 aa).

This sequence belongs to the eukaryotic ribosomal protein eL15 family. In terms of assembly, component of the large ribosomal subunit.

The protein resides in the cytoplasm. In terms of biological role, component of the large ribosomal subunit. The ribosome is a large ribonucleoprotein complex responsible for the synthesis of proteins in the cell. The chain is Large ribosomal subunit protein eL15 (rpl15) from Silurus meridionalis (Southern catfish).